The primary structure comprises 322 residues: GTP 3',8-cyclase (322 aa).

The Radical SAM core domain occupies 5–217; that stretch reads SYGRVVDYLR…DIISKKYNIK (213 aa). Arg14 serves as a coordination point for GTP. Cys21 and Cys25 together coordinate [4Fe-4S] cluster. Tyr27 is an S-adenosyl-L-methionine binding site. Residue Cys28 participates in [4Fe-4S] cluster binding. Residue Arg64 coordinates GTP. An S-adenosyl-L-methionine-binding site is contributed by Gly68. GTP is bound at residue Thr95. Residue Ser119 participates in S-adenosyl-L-methionine binding. Lys155 contributes to the GTP binding site. Met189 serves as a coordination point for S-adenosyl-L-methionine. [4Fe-4S] cluster contacts are provided by Cys249 and Cys252. 254–256 is a GTP binding site; the sequence is RLR. Cys266 contributes to the [4Fe-4S] cluster binding site.

This sequence belongs to the radical SAM superfamily. MoaA family. As to quaternary structure, monomer and homodimer. It depends on [4Fe-4S] cluster as a cofactor.

It carries out the reaction GTP + AH2 + S-adenosyl-L-methionine = (8S)-3',8-cyclo-7,8-dihydroguanosine 5'-triphosphate + 5'-deoxyadenosine + L-methionine + A + H(+). It functions in the pathway cofactor biosynthesis; molybdopterin biosynthesis. In terms of biological role, catalyzes the cyclization of GTP to (8S)-3',8-cyclo-7,8-dihydroguanosine 5'-triphosphate. The sequence is that of GTP 3',8-cyclase from Campylobacter fetus subsp. fetus (strain 82-40).